Consider the following 406-residue polypeptide: MNQPPKPNSFRSGPDEEGRFGIFGGRFVAETLMPLILDLQDEWARAKNDPAFKAELENLGTHYIGRPSPLYFAERLTAELGGAKIYFKREELNHTGSHKINNCIGQILLAKRMGKTRIIAETGAGQHGVASATVAARFGLPCVVYMGATDVERQAPNVFRMKLLGAEVKPVTAGNGTLKDAMNEALRDWVTNVDSTYYLIGTAAGPHPYPEMVRDFQAVIGEEAKQQILEAEGRLPDLVVAAVGGGSNAIGIFHSFLDDEGVRIVGVEAGGKGLDGDEHCASLTAGSPGVLHGNRTYLLQDGDGQIKEGHSISAGLDYPGIGPEHAWLNDIGRVEYVPIMDHEALEAFQTLTRLEGIIPALEPSHALAEVIKRAPKMGKDEIILMNLSGRGDKDIFTVGKILGMGQ.

K99 carries the N6-(pyridoxal phosphate)lysine modification.

Belongs to the TrpB family. In terms of assembly, tetramer of two alpha and two beta chains. Pyridoxal 5'-phosphate serves as cofactor.

It catalyses the reaction (1S,2R)-1-C-(indol-3-yl)glycerol 3-phosphate + L-serine = D-glyceraldehyde 3-phosphate + L-tryptophan + H2O. The protein operates within amino-acid biosynthesis; L-tryptophan biosynthesis; L-tryptophan from chorismate: step 5/5. Its function is as follows. The beta subunit is responsible for the synthesis of L-tryptophan from indole and L-serine. This chain is Tryptophan synthase beta chain, found in Rhizobium meliloti (strain 1021) (Ensifer meliloti).